Here is a 758-residue protein sequence, read N- to C-terminus: 5-methyltetrahydropteroyltriglutamate--homocysteine methyltransferase (758 aa).

5-methyltetrahydropteroyltri-L-glutamate is bound by residues 17–20 (RELK) and K117. L-homocysteine-binding positions include 434-436 (IGS) and E487. Residues 434 to 436 (IGS) and E487 each bind L-methionine. 5-methyltetrahydropteroyltri-L-glutamate-binding positions include 518–519 (RC) and W564. D602 serves as a coordination point for L-homocysteine. Position 602 (D602) interacts with L-methionine. 5-methyltetrahydropteroyltri-L-glutamate is bound at residue E608. Residues H644, C646, and E668 each coordinate Zn(2+). H697 serves as the catalytic Proton donor. A Zn(2+)-binding site is contributed by C729.

Belongs to the vitamin-B12 independent methionine synthase family. It depends on Zn(2+) as a cofactor.

The enzyme catalyses 5-methyltetrahydropteroyltri-L-glutamate + L-homocysteine = tetrahydropteroyltri-L-glutamate + L-methionine. The protein operates within amino-acid biosynthesis; L-methionine biosynthesis via de novo pathway; L-methionine from L-homocysteine (MetE route): step 1/1. Functionally, catalyzes the transfer of a methyl group from 5-methyltetrahydrofolate to homocysteine resulting in methionine formation. This is 5-methyltetrahydropteroyltriglutamate--homocysteine methyltransferase from Yersinia enterocolitica serotype O:8 / biotype 1B (strain NCTC 13174 / 8081).